Reading from the N-terminus, the 631-residue chain is Hepatocyte nuclear factor 1-alpha (631 aa).

The tract at residues methionine 1–glycine 31 is dimerization. Residues methionine 1–glutamate 32 form the HNF-p1 domain. The segment at glycine 40–phenylalanine 81 is disordered. Residue serine 70 is modified to Phosphoserine. Position 74 is a phosphothreonine (threonine 74). Positions lysine 87–glutamine 182 constitute a POU-specific atypical domain. At serine 93 the chain carries Phosphoserine. Residue lysine 117 forms a Glycyl lysine isopeptide (Lys-Gly) (interchain with G-Cter in ubiquitin) linkage. Interaction with DNA stretches follow at residues glutamine 130–glutamate 132, histidine 143–asparagine 149, lysine 155–lysine 158, and arginine 203–tryptophan 206. A disordered region spans residues glycine 183 to lysine 205. The Nuclear localization signal signature appears at lysine 197–lysine 205. The segment at residues glycine 199 to histidine 279 is a DNA-binding region (homeobox; HNF1-type). Residue serine 247 is modified to Phosphoserine. 2 interaction with DNA regions span residues arginine 263–tyrosine 265 and asparagine 270–lysine 273. Disordered stretches follow at residues methionine 283–proline 358 and serine 545–valine 567. Residues glycine 288–alanine 298 are compositionally biased toward pro residues. Serine 313 is subject to Phosphoserine. Residues proline 325–proline 353 are compositionally biased toward polar residues.

It belongs to the HNF1 homeobox family. In terms of assembly, binds DNA as a dimer. Heterotetramer with PCBD1; formed by a dimer of dimers. Interacts with PCBD1. Interacts with BHLHE41. Interacts with NR5A2. Interacts with SPOP; this interaction promotes ubiquitination and degradation of HNF1A. Post-translationally, ubiquitinated in s SPOP-dependent manner; leading to prteasomal degradation. In terms of tissue distribution, liver.

The protein localises to the nucleus. Its function is as follows. Transcriptional activator that regulates the tissue specific expression of multiple genes, especially in pancreatic islet cells and in liver. Binds to the inverted palindrome 5'-GTTAATNATTAAC-3'. Activates the transcription of CYP1A2, CYP2E1 and CYP3A11. In terms of biological role, (Microbial infection) Plays a crucial role for hepatitis B virus gene transcription and DNA replication. Mechanistically, synergistically cooperates with NR5A2 to up-regulate the activity of one of the critical cis-elements in the hepatitis B virus genome enhancer II (ENII). This chain is Hepatocyte nuclear factor 1-alpha (HNF1A), found in Homo sapiens (Human).